The chain runs to 379 residues: Programmed cell death protein 2-like (379 aa).

This Gallus gallus (Chicken) protein is Programmed cell death protein 2-like (PDCD2L).